An 865-amino-acid chain; its full sequence is Leucine--tRNA ligase (865 aa).

Residues 58-68 (PYPSGNLHMGH) carry the 'HIGH' region motif. Positions 629–633 (KMSKS) match the 'KMSKS' region motif. Residue lysine 632 coordinates ATP.

This sequence belongs to the class-I aminoacyl-tRNA synthetase family.

Its subcellular location is the cytoplasm. It catalyses the reaction tRNA(Leu) + L-leucine + ATP = L-leucyl-tRNA(Leu) + AMP + diphosphate. The sequence is that of Leucine--tRNA ligase from Synechococcus sp. (strain ATCC 27144 / PCC 6301 / SAUG 1402/1) (Anacystis nidulans).